Reading from the N-terminus, the 116-residue chain is Large ribosomal subunit protein bL17 (116 aa).

Belongs to the bacterial ribosomal protein bL17 family. As to quaternary structure, part of the 50S ribosomal subunit. Contacts protein L32.

In Picosynechococcus sp. (strain ATCC 27264 / PCC 7002 / PR-6) (Agmenellum quadruplicatum), this protein is Large ribosomal subunit protein bL17.